Reading from the N-terminus, the 276-residue chain is Homeobox-leucine zipper protein HOX22 (276 aa).

Positions 70 to 130 (AGERKRRFTE…NKRARWRSKQ (61 aa)) form a DNA-binding region, homeobox. Positions 129–173 (KQLEHDYAALRSKYDALHSRVESLKQEKLALTVQLHELRERLRER) are leucine-zipper. A disordered region spans residues 170-212 (LREREERSGNGGAATTAASSSSCNGSGSEEVDDDDDKRNAAAG). Over residues 182–197 (AATTAASSSSCNGSGS) the composition is skewed to low complexity.

Belongs to the HD-ZIP homeobox family. Class I subfamily. Expressed in seedlings, roots, stems, leaf sheaths and blades and panicles.

The protein resides in the nucleus. Functionally, probable transcription factor. The sequence is that of Homeobox-leucine zipper protein HOX22 (HOX22) from Oryza sativa subsp. japonica (Rice).